Consider the following 598-residue polypeptide: Transcription factor cpaR (598 aa).

Residues cysteine 22 to cysteine 51 constitute a DNA-binding region (zn(2)-C6 fungal-type).

It localises to the nucleus. Transcription factor; part of the gene cluster that mediates the biosynthesis of the fungal neurotoxin cyclopiazonic acid (CPA), a nanomolar inhibitor of Ca(2+)-ATPase with a unique pentacyclic indole tetramic acid scaffold. In Aspergillus oryzae (Yellow koji mold), this protein is Transcription factor cpaR.